The following is a 212-amino-acid chain: uncharacterized protein (212 aa).

The segment at 1-88 is disordered; it reads MAEEQKIALE…PAPAKPASAS (88 aa). Phosphoserine is present on Ser13. The segment covering 23 to 41 has biased composition (pro residues); that stretch reads ADTPAPAPAEIPAPAPAPT. A compositionally biased stretch (basic and acidic residues) spans 45–54; it reads VTKDVAEEKI.

It belongs to the remorin family.

It localises to the cell membrane. This is an uncharacterized protein from Arabidopsis thaliana (Mouse-ear cress).